The chain runs to 113 residues: Venom protein 184 (113 aa).

The signal sequence occupies residues Met1–Ser21.

Post-translationally, contains 3 disulfide bonds. Expressed by the venom gland.

It is found in the secreted. This chain is Venom protein 184, found in Lychas mucronatus (Chinese swimming scorpion).